We begin with the raw amino-acid sequence, 432 residues long: 3-phosphoshikimate 1-carboxyvinyltransferase (432 aa).

The 3-phosphoshikimate site is built by Lys-25, Ser-26, and Arg-30. Lys-25 is a phosphoenolpyruvate binding site. 2 residues coordinate phosphoenolpyruvate: Gly-97 and Arg-125. 3-phosphoshikimate-binding residues include Ser-170, Gln-172, Asp-318, and Lys-345. Phosphoenolpyruvate is bound at residue Gln-172. Asp-318 acts as the Proton acceptor in catalysis. Arg-349 and Arg-393 together coordinate phosphoenolpyruvate.

It belongs to the EPSP synthase family. Monomer.

It is found in the cytoplasm. The enzyme catalyses 3-phosphoshikimate + phosphoenolpyruvate = 5-O-(1-carboxyvinyl)-3-phosphoshikimate + phosphate. The protein operates within metabolic intermediate biosynthesis; chorismate biosynthesis; chorismate from D-erythrose 4-phosphate and phosphoenolpyruvate: step 6/7. In terms of biological role, catalyzes the transfer of the enolpyruvyl moiety of phosphoenolpyruvate (PEP) to the 5-hydroxyl of shikimate-3-phosphate (S3P) to produce enolpyruvyl shikimate-3-phosphate and inorganic phosphate. The polypeptide is 3-phosphoshikimate 1-carboxyvinyltransferase (Geobacillus thermodenitrificans (strain NG80-2)).